Reading from the N-terminus, the 252-residue chain is 2-succinyl-6-hydroxy-2,4-cyclohexadiene-1-carboxylate synthase (252 aa).

It belongs to the AB hydrolase superfamily. MenH family. Monomer.

It catalyses the reaction 5-enolpyruvoyl-6-hydroxy-2-succinyl-cyclohex-3-ene-1-carboxylate = (1R,6R)-6-hydroxy-2-succinyl-cyclohexa-2,4-diene-1-carboxylate + pyruvate. It functions in the pathway quinol/quinone metabolism; 1,4-dihydroxy-2-naphthoate biosynthesis; 1,4-dihydroxy-2-naphthoate from chorismate: step 3/7. Its pathway is quinol/quinone metabolism; menaquinone biosynthesis. Functionally, catalyzes a proton abstraction reaction that results in 2,5-elimination of pyruvate from 2-succinyl-5-enolpyruvyl-6-hydroxy-3-cyclohexene-1-carboxylate (SEPHCHC) and the formation of 2-succinyl-6-hydroxy-2,4-cyclohexadiene-1-carboxylate (SHCHC). This Salmonella enteritidis PT4 (strain P125109) protein is 2-succinyl-6-hydroxy-2,4-cyclohexadiene-1-carboxylate synthase.